Consider the following 344-residue polypeptide: Fructose-1,6-bisphosphatase, cytosolic (344 aa).

Residues Glu71, Glu100, Asp121, Leu123, and Asp124 each coordinate Mg(2+). Substrate contacts are provided by residues 124-127, Asn215, Tyr247, Tyr267, and Lys277; that span reads DGSS. Position 283 (Glu283) interacts with Mg(2+).

It belongs to the FBPase class 1 family. Requires Mg(2+) as cofactor.

It is found in the cytoplasm. It carries out the reaction beta-D-fructose 1,6-bisphosphate + H2O = beta-D-fructose 6-phosphate + phosphate. The protein is Fructose-1,6-bisphosphatase, cytosolic of Oryza coarctata (Wild rice).